Consider the following 143-residue polypeptide: Large ribosomal subunit protein uL16 (143 aa).

The protein belongs to the universal ribosomal protein uL16 family. Part of the 50S ribosomal subunit.

Binds 23S rRNA and is also seen to make contacts with the A and possibly P site tRNAs. The polypeptide is Large ribosomal subunit protein uL16 (Oenococcus oeni (strain ATCC BAA-331 / PSU-1)).